Consider the following 146-residue polypeptide: Anti-sigma F factor (146 aa).

Belongs to the anti-sigma-factor family.

The catalysed reaction is L-seryl-[protein] + ATP = O-phospho-L-seryl-[protein] + ADP + H(+). It carries out the reaction L-threonyl-[protein] + ATP = O-phospho-L-threonyl-[protein] + ADP + H(+). In terms of biological role, binds to sigma F and blocks its ability to form an RNA polymerase holoenzyme (E-sigma F). Phosphorylates SpoIIAA on a serine residue. This phosphorylation may enable SpoIIAA to act as an anti-anti-sigma factor that counteracts SpoIIAB and thus releases sigma F from inhibition. In Bacillus anthracis (strain A0248), this protein is Anti-sigma F factor.